A 130-amino-acid chain; its full sequence is Small ribosomal subunit protein uS8 (130 aa).

The protein belongs to the universal ribosomal protein uS8 family. As to quaternary structure, part of the 30S ribosomal subunit. Contacts proteins S5 and S12.

One of the primary rRNA binding proteins, it binds directly to 16S rRNA central domain where it helps coordinate assembly of the platform of the 30S subunit. The sequence is that of Small ribosomal subunit protein uS8 from Pseudomonas aeruginosa (strain UCBPP-PA14).